The following is a 652-amino-acid chain: MSNSSIEKIDNKYNFKIEYKLINNKELLKSRLSEIPKSSGCYLFKDIDNNLLYIGKSKKLRSRVSSYFNNYSDLTPRLSLMVRQITEIEIIVTDSEYEALNLESNLIKTNKPYFNILLKDDKKYPYLCITWSEKYPRIFITRRRRNRNNLDRYYGPYVDVGLLRRTLFTIKKIFPLRQRPRPVYKDRTCLNYSIGRCPGVCQEVISSDDYKKIMQQVSMIFQGRNDDLEIFLQKKMLQFSNDLDYENAAKIRDQISGLKLLTESQKISIPDSSINRDIFGIVSEKNVASIQIFQMRSGKLIGRIGYSQKLNNEDENHILQKILEEHYMNVEAVEIPSEILIQYNLPKQATIEDWLTELRKKKVKILIPKRNKKHETVEMVLKNAKLELDRILNGIQDNESSIEDLAQILELSEQPKRIEGYDISHIQGSDPVASQVVFIDGIPSKQHYRKYKIKDPNVFVGHSDDFASIYEVIHRRFKKWSRFKKSGGDFSILNDKTNSKLDNELLSDWPDLIMIDGGKGQLNAAIKALNELNLEEEVTICSLAKKNEEIFIPGFTKSLDTDENQKGVLLLRRVRDEAHRFALSFHRDKRSKRMNRSQLSQISGLGPSRIRELLEYFKSIDAIRIASKEDLSKVKGLGKNSVNDIYEYFNEL.

Positions 37-116 (KSSGCYLFKD…IKTNKPYFNI (80 aa)) constitute a GIY-YIG domain. A UVR domain is found at 226-261 (DDLEIFLQKKMLQFSNDLDYENAAKIRDQISGLKLL).

This sequence belongs to the UvrC family. Interacts with UvrB in an incision complex.

Its subcellular location is the cytoplasm. In terms of biological role, the UvrABC repair system catalyzes the recognition and processing of DNA lesions. UvrC both incises the 5' and 3' sides of the lesion. The N-terminal half is responsible for the 3' incision and the C-terminal half is responsible for the 5' incision. The sequence is that of UvrABC system protein C from Prochlorococcus marinus (strain MIT 9312).